A 355-amino-acid polypeptide reads, in one-letter code: MQIQSQETTAEGAERIEVVPETLDDLWHLSYVIEPGDLVSGDTTRRIQRNDDNLRDKGGEREPMWIQIEVTDVEFAKFANRLRVGGEIVDCSREDQLGFHHTLNVEEHTELTVEKHLKPDQADRLEEAVEATENPDVAIATVEEGEAHVHTVAQYGTEERATITSTTGKGEYARPRKELFDELASVLKRQDVDAYILAGPGFTKQDALDHFQDEIPDIAEQITVVDTSAVGDRGVHEVLKRGAVEDVQQQTRIAEEADYIDELMARIGSGSEVAYGPEEVAKAADYGAIETLLVLDERLRLERAGEGDWDIDVDQIIETTEQKGGDVTVFSAEFAPGQQLSNLGGVAALLRYRLD.

The protein belongs to the eukaryotic release factor 1 family. Pelota subfamily. In terms of assembly, monomer. A divalent metal cation is required as a cofactor.

It localises to the cytoplasm. Functionally, may function in recognizing stalled ribosomes, interact with stem-loop structures in stalled mRNA molecules, and effect endonucleolytic cleavage of the mRNA. May play a role in the release non-functional ribosomes and degradation of damaged mRNAs. Has endoribonuclease activity. The protein is Protein pelota homolog of Haloarcula marismortui (strain ATCC 43049 / DSM 3752 / JCM 8966 / VKM B-1809) (Halobacterium marismortui).